A 498-amino-acid chain; its full sequence is XK-related protein 4 (498 aa).

Residues 24–46 form a disordered region; sequence SEHSGSVQGLHPGAQPDSAGAGD. The next 2 membrane-spanning stretches (helical) occupy residues 81–101 and 111–131; these read CLWI…DVWL and YWWF…VQLF. A disordered region spans residues 166–203; the sequence is SHGDVTAQHHPATPQRQASTASRNTTTNSTASTGLGPR. Residues 183-198 are compositionally biased toward low complexity; that stretch reads ASTASRNTTTNSTAST. A run of 2 helical transmembrane segments spans residues 302–322 and 332–352; these read LFIY…LWYL and FAVP…VFML.

Belongs to the XK family.

It localises to the cell membrane. It carries out the reaction a 1,2-diacyl-sn-glycero-3-phospho-L-serine(in) = a 1,2-diacyl-sn-glycero-3-phospho-L-serine(out). In terms of biological role, phospholipid scramblase that promotes phosphatidylserine exposure on apoptotic cell surface. Phosphatidylserine is a specific marker only present at the surface of apoptotic cells and acts as a specific signal for engulfment. The sequence is that of XK-related protein 4 from Tetraodon nigroviridis (Spotted green pufferfish).